Consider the following 443-residue polypeptide: Inactive polypeptide N-acetylgalactosaminyltransferase-like protein 5 (443 aa).

Residues 1–4 (MRNA) are Cytoplasmic-facing. The chain crosses the membrane as a helical; Signal-anchor for type II membrane protein span at residues 5–27 (IIRCLFYGSLTFGIWTALLFIYL). Residues 28–443 (HHNHVSNWQK…PELEASVNRS (416 aa)) are Lumenal-facing. N-linked (GlcNAc...) asparagine glycosylation occurs at N87. Intrachain disulfides connect C124-C355 and C346-C422. Residues 133–243 (LPTASIVICF…RVWLEPLLHA (111 aa)) form a catalytic subdomain A region. The substrate site is built by D174 and R204. D227 contacts Mn(2+). S228 contributes to the substrate binding site. H229 is a Mn(2+) binding site. Residues 301–363 (PIRSPAMSGG…PCSRVGHISK (63 aa)) are catalytic subdomain B. W332 contributes to the substrate binding site. H360 provides a ligand contact to Mn(2+).

Belongs to the glycosyltransferase 2 family. GalNAc-T subfamily. Mn(2+) is required as a cofactor. Expressed in testis.

The protein resides in the late endosome membrane. Its function is as follows. Probable inactive glycosyltransferase required during spermatid development. May participate in protein loading into the acrosomes and accumulation of ubiquitin-proteasome systems around the head-tail coupling apparatus region. This Macaca fascicularis (Crab-eating macaque) protein is Inactive polypeptide N-acetylgalactosaminyltransferase-like protein 5 (GALNTL5).